Consider the following 119-residue polypeptide: Large ribosomal subunit protein uL18 (119 aa).

This sequence belongs to the universal ribosomal protein uL18 family. Part of the 50S ribosomal subunit; part of the 5S rRNA/L5/L18/L25 subcomplex. Contacts the 5S and 23S rRNAs.

This is one of the proteins that bind and probably mediate the attachment of the 5S RNA into the large ribosomal subunit, where it forms part of the central protuberance. The protein is Large ribosomal subunit protein uL18 of Paracoccus denitrificans (strain Pd 1222).